The primary structure comprises 396 residues: MTTLVLDNGAYNAKIGYSHENVSVIPNCQFRSKTARLKTFTANQIDEIKDPSGLFYILPFQKGYLVNWDVQRQVWDYLFGKEMYQVDFLDTNIIITEPYFNFTSIQESMNEILFEEYQFQAVLRVNAGALSAHRYFRDNPSELCCIIVDSGYSFTHIVPYCRSKKKKEAIIRINVGGKLLTNHLKEIISYRQLHVMDETHVINQVKEDVCYVSQDFYRDMDIAKLKGEENTVMIDYVLPDFSTIKKGFCKPREEMVLSGKYKSGEQILRLANERFAVPEILFNPSDIGIQEMGIPEAIVYSIQNLPEEMQPHFFKNIVLTGGNSLFPGFRDRVYSEVRCLTPTDYDVSVVLPENPITYAWEGGKLISENDDFEDMVVTREDYEENGHSVCEEKFDI.

At threonine 2 the chain carries N-acetylthreonine. Residue lysine 260 is modified to N6-acetyllysine.

It belongs to the actin family. ARP6 subfamily. As to quaternary structure, component of the chromatin-remodeling SRCAP complex composed of at least SRCAP, DMAP1, RUVBL1, RUVBL2, ACTL6A, YEATS4, ACTR6 and ZNHIT1. Interacts with CBX1, CBX3 and CBX5.

Its subcellular location is the cytoplasm. The protein resides in the cytoskeleton. It localises to the nucleus. It is found in the nucleolus. In terms of biological role, required for formation and/or maintenance of proper nucleolar structure and function. Plays a dual role in the regulation of ribosomal DNA (rDNA) transcription. In the presence of high glucose, maintains active rDNA transcription through H2A.Z deposition and under glucose starvation, is required for the repression of rDNA transcription, and this function may be independent of H2A.Z. This is Actin-related protein 6 (ACTR6) from Homo sapiens (Human).